The chain runs to 231 residues: Putative cobalt transport protein CbiM 2 (231 aa).

The next 6 membrane-spanning stretches (helical) occupy residues 8 to 28 (LPIG…IYGI), 41 to 61 (VLPL…LKIP), 75 to 95 (LSAA…VLLF), 108 to 128 (LGAN…LVFV), 136 to 156 (VGIG…TYTV), and 176 to 196 (IAFA…EGII).

The protein belongs to the CbiM family. Forms an energy-coupling factor (ECF) transporter complex composed of an ATP-binding protein (A component, CbiO), a transmembrane protein (T component, CbiQ) and 2 possible substrate-capture proteins (S components, CbiM and CbiN) of unknown stoichimetry.

It localises to the cell membrane. Its pathway is cofactor biosynthesis; adenosylcobalamin biosynthesis. In terms of biological role, part of the energy-coupling factor (ECF) transporter complex CbiMNOQ involved in cobalt import. This chain is Putative cobalt transport protein CbiM 2, found in Methanocorpusculum labreanum (strain ATCC 43576 / DSM 4855 / Z).